Reading from the N-terminus, the 429-residue chain is Adenylosuccinate synthetase (429 aa).

Residues 13–19 and 41–43 contribute to the GTP site; these read GDEGKGK and GHT. Asp14 serves as the catalytic Proton acceptor. Residues Asp14 and Gly41 each coordinate Mg(2+). Residues 14–17, 39–42, Thr130, Arg144, Gln225, Thr240, and Arg304 each bind IMP; these read DEGK and NAGH. Catalysis depends on His42, which acts as the Proton donor. Substrate is bound at residue 300 to 306; that stretch reads ATTGRAR. GTP contacts are provided by residues Arg306, 332 to 334, and 413 to 415; these read KLD and STG.

The protein belongs to the adenylosuccinate synthetase family. In terms of assembly, homodimer. It depends on Mg(2+) as a cofactor.

The protein localises to the cytoplasm. It carries out the reaction IMP + L-aspartate + GTP = N(6)-(1,2-dicarboxyethyl)-AMP + GDP + phosphate + 2 H(+). It participates in purine metabolism; AMP biosynthesis via de novo pathway; AMP from IMP: step 1/2. In terms of biological role, plays an important role in the de novo pathway of purine nucleotide biosynthesis. Catalyzes the first committed step in the biosynthesis of AMP from IMP. In Pseudomonas fluorescens (strain Pf0-1), this protein is Adenylosuccinate synthetase.